Reading from the N-terminus, the 505-residue chain is ATP synthase subunit alpha (505 aa).

170–177 contributes to the ATP binding site; it reads GDRQTGKT.

Belongs to the ATPase alpha/beta chains family. As to quaternary structure, F-type ATPases have 2 components, CF(1) - the catalytic core - and CF(0) - the membrane proton channel. CF(1) has five subunits: alpha(3), beta(3), gamma(1), delta(1), epsilon(1). CF(0) has four main subunits: a(1), b(1), b'(1) and c(9-12).

The protein localises to the cellular thylakoid membrane. The catalysed reaction is ATP + H2O + 4 H(+)(in) = ADP + phosphate + 5 H(+)(out). Functionally, produces ATP from ADP in the presence of a proton gradient across the membrane. The alpha chain is a regulatory subunit. In Prochlorococcus marinus (strain MIT 9313), this protein is ATP synthase subunit alpha.